The following is a 395-amino-acid chain: Crh-like protein 5 (395 aa).

An N-terminal signal peptide occupies residues 1–19 (MYFKYTAAALAAVLPLCSA). Cysteine 25 and cysteine 32 form a disulfide bridge. The 186-residue stretch at 45 to 230 (ADFTSASALD…WAGGLTDYSA (186 aa)) folds into the GH16 domain. Residue glutamate 119 is the Nucleophile of the active site. The active-site Proton donor is glutamate 123. Residues glutamate 123, arginine 203, tryptophan 207, and threonine 218 each contribute to the chitin site. The disordered stretch occupies residues 271–374 (ISSSSSVTSS…PELSQGAAGS (104 aa)). Low complexity-rich tracts occupy residues 272–338 (SSSS…SNTG) and 348–364 (GSSSSTGSSTSAGASAT). Asparagine 319 carries an N-linked (GlcNAc...) asparagine glycan. Glycine 370 carries GPI-like-anchor amidated glycine lipidation. The propeptide at 371-395 (AAGSIKGSVTACALVFGAVAAVLAF) is removed in mature form.

This sequence belongs to the glycosyl hydrolase 16 family. CRH1 subfamily. In terms of processing, the GPI-like anchor contains a phosphoceramide lipid group. The anchor position has not been determined.

The protein resides in the cell membrane. It is found in the secreted. The protein localises to the cell wall. The enzyme catalyses Random endo-hydrolysis of N-acetyl-beta-D-glucosaminide (1-&gt;4)-beta-linkages in chitin and chitodextrins.. Functionally, dual chitinase/transglycosylase that plays a role in cell wall architecture. Chitinase and transglycosylase activities are coupled. Required for the polysaccharide cross-linking at the septa and the cell wall. More specifically, transfers chitin to 1,6-beta-glucan in the cell wall. Chr5 shows acceptor substrate promiscuity and is also able to cross-link chitin to chitin. In Aspergillus fumigatus (strain ATCC MYA-4609 / CBS 101355 / FGSC A1100 / Af293) (Neosartorya fumigata), this protein is Crh-like protein 5.